Consider the following 298-residue polypeptide: MSALYFQNLPSRPANKENYTRLLLKHINPNNKYAINPSLPLPHNKLQISSQPLMLLDDQMGLLEVSISRSSKMTNQAFLTFVTQEEADRFLEKYTTTALKVQGRKVRMGKARTNSLLGLSIEMQKKKGNDETYNLDIKKVLKARKLKRKLRSDDICAKKFRLKRQIRRLKHKLRSRKVEEAEIDRIVKEFETRRLENMKSQQENLKQSQKPLKRAKVSNTMENPPNKVLLIQNLPSGTTEQLLSQILGNEALVEIRLVSVRNLAFVEYETVADATKIKNQLGSTYKLQNNDVTIGFAK.

RRM domains follow at residues 2–113 (SALY…KART) and 227–298 (KVLL…GFAK).

The protein belongs to the RRM U1 A/B'' family. In terms of assembly, component of the spliceosome where it is associated with snRNP U1.

It is found in the nucleus. In terms of biological role, involved in nuclear mRNA splicing. The principal role of the U1A is to help fold or maintain U1 RNA in an active configuration. It is the first snRNP to interact with pre-mRNA. This interaction is required for the subsequent binding of U2 snRNP and the U4/U6/U5 tri-snRNP. This Saccharomyces cerevisiae (strain ATCC 204508 / S288c) (Baker's yeast) protein is U1 small nuclear ribonucleoprotein A (MUD1).